Consider the following 332-residue polypeptide: L-lactate dehydrogenase A chain (332 aa).

Alanine 2 carries the N-acetylalanine modification. At lysine 5 the chain carries N6-acetyllysine; alternate. Lysine 5 is subject to N6-succinyllysine; alternate. The residue at position 14 (lysine 14) is an N6-acetyllysine. Residue glycine 29–lysine 57 participates in NAD(+) binding. Lysine 57 carries the N6-acetyllysine; alternate modification. Residue lysine 57 forms a Glycyl lysine isopeptide (Lys-Gly) (interchain with G-Cter in SUMO2); alternate linkage. Lysine 81 carries the post-translational modification N6-acetyllysine. Arginine 99 is a binding site for NAD(+). Substrate is bound at residue arginine 106. Position 118 is an N6-acetyllysine; alternate (lysine 118). Lysine 118 bears the N6-succinyllysine; alternate mark. Lysine 126 carries the N6-acetyllysine modification. Asparagine 138 is a binding site for NAD(+). Asparagine 138 and arginine 169 together coordinate substrate. Histidine 193 functions as the Proton acceptor in the catalytic mechanism. N6-acetyllysine occurs at positions 224 and 232. A Phosphotyrosine modification is found at tyrosine 239. Lysine 243 carries the N6-acetyllysine modification. Threonine 248 is a substrate binding site. The residue at position 309 (threonine 309) is a Phosphothreonine. At lysine 318 the chain carries N6-acetyllysine; alternate. Lysine 318 bears the N6-succinyllysine; alternate mark. Threonine 322 is subject to Phosphothreonine.

It belongs to the LDH/MDH superfamily. LDH family. Homotetramer. Interacts with PTEN upstream reading frame protein MP31. Post-translationally, ISGylated.

The protein resides in the cytoplasm. The catalysed reaction is (S)-lactate + NAD(+) = pyruvate + NADH + H(+). It functions in the pathway fermentation; pyruvate fermentation to lactate; (S)-lactate from pyruvate: step 1/1. Interconverts simultaneously and stereospecifically pyruvate and lactate with concomitant interconversion of NADH and NAD(+). This chain is L-lactate dehydrogenase A chain (Ldha), found in Mus musculus (Mouse).